Reading from the N-terminus, the 239-residue chain is Diablo IAP-binding mitochondrial protein (239 aa).

A mitochondrion-targeting transit peptide spans 1 to 21 (MAALKSWLSRSVTSFFRYRQC). The IAP-binding signature appears at 56 to 60 (AVPIA). The tract at residues 217 to 239 (RQKTQEEGEERAESEQEAYLRED) is disordered.

This sequence belongs to the Smac/DIABLO protein family. As to quaternary structure, homodimer. Interacts with BIRC2/c-IAP1 (via BIR3 domain). Interacts with BIRC6/BRUCE; inhibits BIRC6 activity. Interacts with BIRC7/livin. Interacts with XIAP/BIRC4 (via BIR3 domain). Interacts with the monomeric and dimeric form of BIRC5/survivin. Interacts with AREL1 (via HECT domain); in the cytoplasm following induction of apoptosis. Interacts with BEX3. In terms of processing, ubiquitinated by BIRC7/livin. Ubiquitinated by BIRC6. The precursor form is proteolytically cleaved by mitochondrial processing peptidase MPP to remove the transit peptide and produce an intermediate form. This is then processed by PARL to produce the mature cleaved form which is released from mitochondria into the cytosol in apoptotic cells. Ubiquitously expressed with highest expression in testis. Expression is also high in heart, liver, kidney, spleen, prostate and ovary. Low in brain, lung, thymus and peripheral blood leukocytes. Isoform 3 is ubiquitously expressed.

It localises to the mitochondrion. Its subcellular location is the cytoplasm. The protein resides in the cytosol. In terms of biological role, promotes apoptosis by activating caspases in the cytochrome c/Apaf-1/caspase-9 pathway. Acts by opposing the inhibitory activity of inhibitor of apoptosis proteins (IAP). Inhibits the activity of BIRC6/BRUCE by inhibiting its binding to caspases. Its function is as follows. Attenuates the stability and apoptosis-inhibiting activity of XIAP/BIRC4 by promoting XIAP/BIRC4 ubiquitination and degradation through the ubiquitin-proteasome pathway. Also disrupts XIAP/BIRC4 interacting with processed caspase-9 and promotes caspase-3 activation. Functionally, defective in the capacity to down-regulate the XIAP/BIRC4 abundance. In Homo sapiens (Human), this protein is Diablo IAP-binding mitochondrial protein.